We begin with the raw amino-acid sequence, 181 residues long: MMLRVLVGAVLPAMLLAAPPPINKLALFPDKSAWCEAKNITQIVGHSGCEAKSIQNRACLGQCFSYSVPNTFPQSTESLVHCDSCMPAQSMWEIVTLECPGHEEVPRVDKLVEKILHCSCQACGKEPSHEGLSVYVQGEDGPGSQPGTHPHPHPHPHPGGQTPEPEDPPGAPHTEEEGAED.

An N-terminal signal peptide occupies residues 1–16 (MMLRVLVGAVLPAMLL). 5 cysteine pairs are disulfide-bonded: cysteine 35/cysteine 85, cysteine 49/cysteine 99, cysteine 59/cysteine 118, cysteine 63/cysteine 120, and cysteine 82/cysteine 123. Residues 35 to 124 (CEAKNITQIV…ILHCSCQACG (90 aa)) form the CTCK domain. The interval 132-181 (LSVYVQGEDGPGSQPGTHPHPHPHPHPGGQTPEPEDPPGAPHTEEEGAED) is disordered.

Belongs to the DAN family. In terms of assembly, homodimer. In terms of tissue distribution, most abundant in normal lung and meningioma.

Its subcellular location is the secreted. Possible candidate as a tumor suppressor gene of neuroblastoma. May play an important role in preventing cells from entering the final stage (G1/S) of the transformation process. This chain is Neuroblastoma suppressor of tumorigenicity 1 (NBL1), found in Homo sapiens (Human).